Reading from the N-terminus, the 155-residue chain is Small ribosomal subunit protein uS9 (155 aa).

This sequence belongs to the universal ribosomal protein uS9 family.

The protein is Small ribosomal subunit protein uS9 of Rhizobium johnstonii (strain DSM 114642 / LMG 32736 / 3841) (Rhizobium leguminosarum bv. viciae).